A 128-amino-acid chain; its full sequence is Group 2 truncated hemoglobin GlbO (128 aa).

The segment at residues 23-36 (YAQVAEDEVLRRVY) is a cross-link (isodityrosine (Tyr-Tyr)). 3',4'-dihydroxyphenylalanine is present on Tyr-36. Residue His-75 participates in heme binding.

It belongs to the truncated hemoglobin family. Group II subfamily. As to quaternary structure, homododecamer. Requires heme as cofactor. Post-translationally, contains L-DOPA (3',4'-dihydroxyphenylalanine).

This chain is Group 2 truncated hemoglobin GlbO (glbO), found in Mycobacterium bovis (strain ATCC BAA-935 / AF2122/97).